The primary structure comprises 530 residues: Ubiquitin carboxyl-terminal hydrolase 17-like protein 22 (530 aa).

Positions 80-375 (AGLQNMGNTC…QAYVLFYIQK (296 aa)) constitute a USP domain. Cys89 acts as the Nucleophile in catalysis. The Proton acceptor role is filled by His334. 2 stretches are compositionally biased toward basic and acidic residues: residues 382-392 (SESVSRGREPR) and 398-412 (DTDR…KRDH). 2 disordered regions span residues 382-412 (SESV…KRDH) and 476-530 (KNHH…LVCQ). Positions 484–495 (SSLLKLSSTTPT) are enriched in low complexity. Over residues 496-505 (HQESMNTGTL) the composition is skewed to polar residues. Residues 510–524 (GRARRSKGKNKHSKR) show a composition bias toward basic residues.

This sequence belongs to the peptidase C19 family. USP17 subfamily.

It is found in the nucleus. Its subcellular location is the endoplasmic reticulum. The catalysed reaction is Thiol-dependent hydrolysis of ester, thioester, amide, peptide and isopeptide bonds formed by the C-terminal Gly of ubiquitin (a 76-residue protein attached to proteins as an intracellular targeting signal).. In terms of biological role, deubiquitinating enzyme that removes conjugated ubiquitin from specific proteins to regulate different cellular processes that may include cell proliferation, progression through the cell cycle, apoptosis, cell migration, and the cellular response to viral infection. This Homo sapiens (Human) protein is Ubiquitin carboxyl-terminal hydrolase 17-like protein 22 (USP17L22).